The chain runs to 362 residues: Chorismate synthase (362 aa).

R47 lines the NADP(+) pocket. Residues 124–126 (RSS), G286, 301–305 (KPTAT), and R327 contribute to the FMN site.

Belongs to the chorismate synthase family. As to quaternary structure, homotetramer. Requires FMNH2 as cofactor.

The enzyme catalyses 5-O-(1-carboxyvinyl)-3-phosphoshikimate = chorismate + phosphate. It participates in metabolic intermediate biosynthesis; chorismate biosynthesis; chorismate from D-erythrose 4-phosphate and phosphoenolpyruvate: step 7/7. Catalyzes the anti-1,4-elimination of the C-3 phosphate and the C-6 proR hydrogen from 5-enolpyruvylshikimate-3-phosphate (EPSP) to yield chorismate, which is the branch point compound that serves as the starting substrate for the three terminal pathways of aromatic amino acid biosynthesis. This reaction introduces a second double bond into the aromatic ring system. This Trichormus variabilis (strain ATCC 29413 / PCC 7937) (Anabaena variabilis) protein is Chorismate synthase.